The sequence spans 316 residues: PAK4-inhibitor inka1 (316 aa).

The interval 108-130 (YSEVSGSSLRGEEDDIVEEESET) is disordered. The segment covering 119–128 (EEDDIVEEES) has biased composition (acidic residues). 2 inka box regions span residues 182–219 (DSQD…DLPE) and 289–316 (SDIA…AGFL).

It belongs to the INKA family. As to quaternary structure, interacts with pak4/pak5.

The protein resides in the nucleus. Its subcellular location is the cytoplasm. Functionally, inhibitor of the serine/threonine-protein kinase pak4/pak5. Acts by binding pak4/pak5 in a substrate-like manner, inhibiting the protein kinase activity. Required for the proper migration of neural crest cells during embryonic development, probably by inhibiting pak4/pak5. The chain is PAK4-inhibitor inka1 from Xenopus laevis (African clawed frog).